The sequence spans 214 residues: Cytochrome b (214 aa).

4 consecutive transmembrane segments (helical) span residues Phe31–Ile51, Trp75–Ile96, Trp111–Leu131, and Phe176–Leu196. Heme b contacts are provided by His81 and His95. His180 and His194 together coordinate heme b. His199 contributes to the a ubiquinone binding site.

Belongs to the cytochrome b family. As to quaternary structure, the cytochrome bc1 complex contains 3 respiratory subunits (MT-CYB, CYC1 and UQCRFS1), 2 core proteins (UQCRC1 and UQCRC2) and probably 6 low-molecular weight proteins. The cofactor is heme b.

The protein localises to the mitochondrion inner membrane. Component of the ubiquinol-cytochrome c reductase complex (complex III or cytochrome b-c1 complex) that is part of the mitochondrial respiratory chain. The b-c1 complex mediates electron transfer from ubiquinol to cytochrome c. Contributes to the generation of a proton gradient across the mitochondrial membrane that is then used for ATP synthesis. The polypeptide is Cytochrome b (MT-CYB) (Crotalus atrox (Western diamondback rattlesnake)).